A 357-amino-acid chain; its full sequence is Neutral protease 2 homolog UREG_02006 (357 aa).

Positions methionine 1–alanine 19 are cleaved as a signal peptide. A propeptide spanning residues leucine 20–arginine 179 is cleaved from the precursor. 2 disulfides stabilise this stretch: cysteine 187/cysteine 259 and cysteine 266/cysteine 284. Histidine 308 is a Zn(2+) binding site. Glutamate 309 is a catalytic residue. Zn(2+)-binding residues include histidine 312 and aspartate 323.

The protein belongs to the peptidase M35 family. The cofactor is Zn(2+).

The protein resides in the secreted. It catalyses the reaction Preferential cleavage of bonds with hydrophobic residues in P1'. Also 3-Asn-|-Gln-4 and 8-Gly-|-Ser-9 bonds in insulin B chain.. Functionally, secreted metalloproteinase that allows assimilation of proteinaceous substrates. Shows high activities on basic nuclear substrates such as histone and protamine. The sequence is that of Neutral protease 2 homolog UREG_02006 from Uncinocarpus reesii (strain UAMH 1704).